The sequence spans 255 residues: tRNA (guanine-N(1)-)-methyltransferase (255 aa).

S-adenosyl-L-methionine is bound by residues Gly-113 and 133–138 (IGDYVL).

The protein belongs to the RNA methyltransferase TrmD family. Homodimer.

It localises to the cytoplasm. The catalysed reaction is guanosine(37) in tRNA + S-adenosyl-L-methionine = N(1)-methylguanosine(37) in tRNA + S-adenosyl-L-homocysteine + H(+). Its function is as follows. Specifically methylates guanosine-37 in various tRNAs. The chain is tRNA (guanine-N(1)-)-methyltransferase from Salmonella choleraesuis (strain SC-B67).